Here is a 1465-residue protein sequence, read N- to C-terminus: MDVLEMLRASASGSYNTIFSEAWCQYVSKQITATMYMYCALGMMGVLFLAWFMYFKRMARLRLRDEIARSISAVTNSSGDLRGLRFRKRDKMLFYGRRMLRKMKNVSGQMYSSGKGYKRRAVMRFARRILQLRRDNMPLEMRTVEPPAEYLEETIEGSDRVPPDALYMLQSIRIFGHFEKPVFLRLCKHTQLLELMAGDYLFKITDPDDSVYIVQSGMINVYISNADGSTLSLKTVRKGESVTSLLSFIDVLSGNPSYYKTVTAKAIEKSVVIRLPMQAFEEVFQDNPDVMIRVIQVIMIRLQRVLFTALRNYLGLNAELVQNHMRYKSVSTMSGPINSQTSQSSRQTPNGPPMGISHPLNLMQSTASGTGSGSGSGVSVTVTRPPPSPSRHSREEHTLSDPNPNPDGSVHGTSNLFTEVHGDAPNADLFHQQQQSVGNLSTRRSSITQMTPDGSHSCPPAPGVTTSIDMRLVQSSAVESLRKELGLSEEDAHIIEPFVELRELEPNVTLITEGNADDVCVWFVMTGTLAVYQSNQDATRAKQDKSDMLIHFVHPGEIVGGLAMLTGEASAYTIRSRSNSRIAFIRRAAIYQIMRQRPRIVLDLGNGVVRRLSPLVRQCDYALDWIFLESGRAVYRQDESSDSTYIVLSGRMRSVITHPGGKKEIVGEYGKGDLVGIVEMITETSRTTTVMAVRDSELAKLPEGLFNAIKLRYPIVVTKLISFLSHRFLGSMQTRSGSGAPGAPVEANPVTHKYSTVALVPITDEVPLTPFTYELYHSLCAIGPVLRLTSDVVRKQLGPNIFEAANEYRLTSWLAQQEDRNIITLYQCDSSLSAWTQRCMRQADVILIVGLGDRSHLVGKFEREIDRLAMRTQKELVLLYPEATNAKPANTLSWLNARPWVTKHHHVLCVKRIFTRKSQYRINDLYSRVLLSEPNMHSDFSRLARWLTGNSIGLVLGGGGARGAAHIGMLKAIQEAGIPVDMVGGVSIGALMGALWCSERNITTVTQKAREWSKKMTKWFLQLLDLTYPITSMFSGREFNKTIHDTFGDVSIEDLWIPYFTLTTDITASCHRIHTNGSLWRYVRSSMSLSGYMPPLCDPKDGHLLLDGGYVNNLPGHLWRYCRASMSIAGVFPPFCDYRDGHLLLDGCYTNNVPADVMHNLGAAHIIAIDVGSQDDTDLTNYGDDLSGWWLLYKKWNPFTSPVKVPDLPDIQSRLAYVSCVRQLEEVKNSDYCEYIRPPIDKYKTLAFGSFDEIRDVGYVFGKNYFENMAKAGRLGRFNQWFNKEPPKRVNHASLNEYTFIDLAQIVCRLPETYAVNTADLFSEDEDCDGYISEPTTLNTDRRRIQVPRAGNSLSFSETEMDSDVELDLKLERKTDKSTQSSPPTSSRTSMRGKEEARHMDNWHWGAKHKNETGSGATEGIHTSTEQEQEHQQQQQQDQGVRAEQLVYKDEDKENRSSANNETKN.

The Lumenal segment spans residues Met1–Thr34. The chain crosses the membrane as a helical span at residues Met35–Phe55. Residues Lys56 to Asn1465 lie on the Cytoplasmic side of the membrane. A nucleoside 3',5'-cyclic phosphate is bound at residue Ile174 to Arg301. Composition is skewed to polar residues over residues Ser331 to Pro349 and Gln434 to Gly454. Disordered regions lie at residues Ser331 to His421 and Gln434 to Pro460. Phosphoserine is present on residues Ser446 and Ser455. A nucleoside 3',5'-cyclic phosphate contacts are provided by residues Glu484–Arg611 and Ile600–Arg727. The PNPLA domain maps to Leu954–Arg1120. The short motif at Gly958 to Gly963 is the GXGXXG element. A GXSXG motif is present at residues Gly985–Gly989. Ser987 functions as the Nucleophile in the catalytic mechanism. Asp1107 acts as the Proton acceptor in catalysis. Positions Asp1107–Gly1109 match the DGA/G motif. Ser1201 carries the phosphoserine modification. Residues Leu1371–Asn1465 form a disordered region. The segment covering Ser1378–Ser1390 has biased composition (low complexity). Residues Arg1392 to Asn1402 show a composition bias toward basic and acidic residues. Residues Thr1413–Ser1424 show a composition bias toward polar residues. The segment covering Val1447–Arg1456 has biased composition (basic and acidic residues).

Belongs to the NTE family. Interacts with Pka-C3; interaction inhibits the catalytic function of Pka-C3 and the esterase activity of sws.

It localises to the endoplasmic reticulum membrane. The enzyme catalyses a 1-acyl-sn-glycero-3-phosphocholine + H2O = sn-glycerol 3-phosphocholine + a fatty acid + H(+). Its function is as follows. Phospholipase B that deacylates intracellular phosphatidylcholine (PtdCho), generating glycerophosphocholine (GroPtdCho). This deacylation occurs at both sn-2 and sn-1 positions of PtdCho. Its specific chemical modification by certain organophosphorus (OP) compounds leads to distal axonopathy. Plays a role in the signaling mechanism between neurons and glia that regulates glia wrapping during development of the adult brain. Essential for membrane lipid homeostasis and cell survival in both neurons and glia of the adult brain. In Drosophila erecta (Fruit fly), this protein is Neuropathy target esterase sws.